A 569-amino-acid polypeptide reads, in one-letter code: CTP synthase (569 aa).

The amidoligase domain stretch occupies residues 1 to 276 (MNQATPTKHV…DAYLVRRLDL (276 aa)). Residue Ser18 participates in CTP binding. Residue Ser18 coordinates UTP. Residues 19–24 (SLGKGL) and Asp76 contribute to the ATP site. Residues Asp76 and Glu150 each coordinate Mg(2+). CTP contacts are provided by residues 157–159 (DIE), 197–202 (KTKPTQ), and Lys233. UTP contacts are provided by residues 197–202 (KTKPTQ) and Lys233. Residues 301 to 550 (TVALVGKYVD…VGAAIERQRE (250 aa)) enclose the Glutamine amidotransferase type-1 domain. L-glutamine is bound at residue Gly364. The Nucleophile; for glutamine hydrolysis role is filled by Cys391. L-glutamine-binding positions include 392 to 395 (LGLQ), Glu415, and Arg476. Active-site residues include His523 and Glu525.

This sequence belongs to the CTP synthase family. In terms of assembly, homotetramer.

It catalyses the reaction UTP + L-glutamine + ATP + H2O = CTP + L-glutamate + ADP + phosphate + 2 H(+). It carries out the reaction L-glutamine + H2O = L-glutamate + NH4(+). The catalysed reaction is UTP + NH4(+) + ATP = CTP + ADP + phosphate + 2 H(+). It participates in pyrimidine metabolism; CTP biosynthesis via de novo pathway; CTP from UDP: step 2/2. With respect to regulation, allosterically activated by GTP, when glutamine is the substrate; GTP has no effect on the reaction when ammonia is the substrate. The allosteric effector GTP functions by stabilizing the protein conformation that binds the tetrahedral intermediate(s) formed during glutamine hydrolysis. Inhibited by the product CTP, via allosteric rather than competitive inhibition. In terms of biological role, catalyzes the ATP-dependent amination of UTP to CTP with either L-glutamine or ammonia as the source of nitrogen. Regulates intracellular CTP levels through interactions with the four ribonucleotide triphosphates. This Nocardioides sp. (strain ATCC BAA-499 / JS614) protein is CTP synthase.